The sequence spans 425 residues: Glutamate-1-semialdehyde 2,1-aminomutase (425 aa).

Lysine 266 is modified (N6-(pyridoxal phosphate)lysine).

Belongs to the class-III pyridoxal-phosphate-dependent aminotransferase family. HemL subfamily. As to quaternary structure, homodimer. It depends on pyridoxal 5'-phosphate as a cofactor.

Its subcellular location is the cytoplasm. It catalyses the reaction (S)-4-amino-5-oxopentanoate = 5-aminolevulinate. It functions in the pathway porphyrin-containing compound metabolism; protoporphyrin-IX biosynthesis; 5-aminolevulinate from L-glutamyl-tRNA(Glu): step 2/2. This is Glutamate-1-semialdehyde 2,1-aminomutase from Nitratidesulfovibrio vulgaris (strain DSM 19637 / Miyazaki F) (Desulfovibrio vulgaris).